The following is a 259-amino-acid chain: Cobalt-precorrin-4 C(11)-methyltransferase (259 aa).

Belongs to the precorrin methyltransferase family.

It carries out the reaction Co-precorrin-4 + S-adenosyl-L-methionine = Co-precorrin-5A + S-adenosyl-L-homocysteine + H(+). It functions in the pathway cofactor biosynthesis; adenosylcobalamin biosynthesis; cob(II)yrinate a,c-diamide from sirohydrochlorin (anaerobic route): step 4/10. In terms of biological role, catalyzes the methylation of C-11 in cobalt-precorrin-4 to form cobalt-precorrin-5A. The polypeptide is Cobalt-precorrin-4 C(11)-methyltransferase (cbiF) (Methanocaldococcus jannaschii (strain ATCC 43067 / DSM 2661 / JAL-1 / JCM 10045 / NBRC 100440) (Methanococcus jannaschii)).